The sequence spans 235 residues: Small ribosomal subunit protein uS3 (235 aa).

Positions 39 to 107 (VRKFLLGQLS…PTKLNISEIR (69 aa)) constitute a KH type-2 domain.

The protein belongs to the universal ribosomal protein uS3 family. As to quaternary structure, part of the 30S ribosomal subunit. Forms a tight complex with proteins S10 and S14.

In terms of biological role, binds the lower part of the 30S subunit head. Binds mRNA in the 70S ribosome, positioning it for translation. This chain is Small ribosomal subunit protein uS3, found in Blochmanniella floridana.